Consider the following 228-residue polypeptide: MRAPLCLLLLLAHAVDMLALYRRKKQAGTGLGGNCTGCVICSEENGCSTCQQRLFLFIRREGIRQYGKCVHDCPLGFFGIRGQEANRCKKCGATCESCFSQDFCIRCKRRFHLYKGKCLPSCPPGTLTHQSTRECQEECEPSPWGSWSPCIHNGKTCGSGWGLETRVREAGPAKQEETASCRVLSESRKCPIKRLCPGERNPRQKNRKDRRQRKDRKLERRPHQRGSQ.

The first 19 residues, 1–19 (MRAPLCLLLLLAHAVDMLA), serve as a signal peptide directing secretion. Asn34 carries N-linked (GlcNAc...) asparagine glycosylation. 11 disulfide bridges follow: Cys35–Cys41, Cys38–Cys47, Cys50–Cys69, Cys73–Cys88, Cys91–Cys98, Cys95–Cys104, Cys107–Cys118, Cys122–Cys135, Cys139–Cys181, Cys150–Cys157, and Cys190–Cys196. The FU repeat unit spans residues 85-128 (ANRCKKCGATCESCFSQDFCIRCKRRFHLYKGKCLPSCPPGTLT). The TSP type-1 domain maps to 138–197 (ECEPSPWGSWSPCIHNGKTCGSGWGLETRVREAGPAKQEETASCRVLSESRKCPIKRLCP). The segment at 193–228 (KRLCPGERNPRQKNRKDRRQRKDRKLERRPHQRGSQ) is disordered. A compositionally biased stretch (basic residues) spans 203 to 228 (RQKNRKDRRQRKDRKLERRPHQRGSQ).

It belongs to the R-spondin family. As to quaternary structure, binds heparin. Interacts with LGR4, LGR5 and LGR6.

The protein resides in the secreted. In terms of biological role, activator of the canonical Wnt signaling pathway by acting as a ligand for LGR4-6 receptors. Upon binding to LGR4-6 (LGR4, LGR5 or LGR6), LGR4-6 associate with phosphorylated LRP6 and frizzled receptors that are activated by extracellular Wnt receptors, triggering the canonical Wnt signaling pathway to increase expression of target genes. Also regulates the canonical Wnt/beta-catenin-dependent pathway and non-canonical Wnt signaling by acting as an inhibitor of ZNRF3, an important regulator of the Wnt signaling pathway. The protein is R-spondin-4 (Rspo4) of Mus musculus (Mouse).